We begin with the raw amino-acid sequence, 382 residues long: L-lysine 4-hydroxylase (382 aa).

Residues H182, E184, and H318 each coordinate Fe cation.

Belongs to the clavaminate synthase family. It depends on Fe(2+) as a cofactor.

It catalyses the reaction L-lysine + 2-oxoglutarate + O2 = (4R)-4-hydroxy-L-lysine + succinate + CO2. Alpha-ketoglutarate-dependent dioxygenase that in vitro catalyzes the regio- and stereoselective hydroxylation of L-lysine, leading to (4R)-4-hydroxy-L-lysine. Cannot use D-lysine or L-ornithine as substrate. This Chitinophaga pinensis (strain ATCC 43595 / DSM 2588 / LMG 13176 / NBRC 15968 / NCIMB 11800 / UQM 2034) protein is L-lysine 4-hydroxylase.